The chain runs to 356 residues: 1-acyl-sn-glycerol-3-phosphate acyltransferase LPAT1, chloroplastic (356 aa).

Residues 1–56 (MDVASARSISSHPSYYGKPICSSQSSLIRISRDKVCCFGRISNGMTSFTTSLHAVP) constitute a chloroplast transit peptide. The chain crosses the membrane as a helical span at residues 127–147 (GIFFCVVAGISATFLIVLMII). The short motif at 202 to 207 (HQSFLD) is the HXXXXD motif element. Residues 224 to 244 (TGIFVIPIIGWAMSMMGVVPL) form a helical membrane-spanning segment.

This sequence belongs to the 1-acyl-sn-glycerol-3-phosphate acyltransferase family. Widely expressed. Expressed at higher level in leaves. Expressed at lower level in silique walls compared to leaves.

The protein resides in the plastid. The protein localises to the chloroplast membrane. It catalyses the reaction a fatty acyl-[ACP] + a 1-acyl-sn-glycero-3-phosphate = a 1,2-diacyl-sn-glycero-3-phosphate + holo-[ACP]. The enzyme catalyses a 1-acyl-sn-glycero-3-phosphate + an acyl-CoA = a 1,2-diacyl-sn-glycero-3-phosphate + CoA. It functions in the pathway phospholipid metabolism; CDP-diacylglycerol biosynthesis; CDP-diacylglycerol from sn-glycerol 3-phosphate: step 2/3. Functionally, plastidial enzyme of the prokaryotic glycerol-3-phosphate pathway that converts lysophosphatidic acid (LPA) into phosphatidic acid by incorporating an acyl moiety at position sn-2. Utilizes palmitoyl-ACP (16:0-ACP) to produce phosphatidic acid containing a saturated group at position sn-2, which is characteristic of lipids synthesized by the prokaryotic pathway. In vitro, can use 16:0-CoA as acyl donor. Essential for embryo development during the transition from the globular to the heart stage when chloroplasts begin to form. This chain is 1-acyl-sn-glycerol-3-phosphate acyltransferase LPAT1, chloroplastic, found in Arabidopsis thaliana (Mouse-ear cress).